Reading from the N-terminus, the 1366-residue chain is DNA-directed RNA polymerase subunit beta' (1366 aa).

Residues 1–40 (MTSTSPKSRRSSGKGRKGSKKKGKQVSQIPPLSKTPPSFR) are disordered. Positions 7–24 (KSRRSSGKGRKGSKKKGK) are enriched in basic residues. Residues 25-38 (QVSQIPPLSKTPPS) are compositionally biased toward polar residues. Positions 250, 317, 324, and 327 each coordinate Zn(2+). The disordered stretch occupies residues 1299-1366 (TAAKSTSVLD…LQEEGLLADE (68 aa)). The segment covering 1353–1366 (ALEGLQEEGLLADE) has biased composition (low complexity).

Belongs to the RNA polymerase beta' chain family. RpoC2 subfamily. In cyanobacteria the RNAP catalytic core is composed of 2 alpha, 1 beta, 1 beta', 1 gamma and 1 omega subunit. When a sigma factor is associated with the core the holoenzyme is formed, which can initiate transcription. The cofactor is Zn(2+).

The enzyme catalyses RNA(n) + a ribonucleoside 5'-triphosphate = RNA(n+1) + diphosphate. Its function is as follows. DNA-dependent RNA polymerase catalyzes the transcription of DNA into RNA using the four ribonucleoside triphosphates as substrates. The chain is DNA-directed RNA polymerase subunit beta' from Prochlorococcus marinus (strain MIT 9211).